The primary structure comprises 517 residues: Zinc finger protein 215 (517 aa).

Residues 48-126 (RQKFRHFQYL…KDMVTLIEDV (79 aa)) enclose the SCAN box domain. One can recognise a KRAB domain in the interval 164–237 (VTFKDVVVEF…EKEIPRKTIF (74 aa)). C2H2-type zinc fingers lie at residues 379 to 401 (YECY…QIIH), 407 to 429 (YKCS…QKLH), 462 to 484 (YQCV…QMIH), and 490 to 512 (FKCK…QKLH).

The protein belongs to the krueppel C2H2-type zinc-finger protein family.

It is found in the nucleus. Its function is as follows. May be involved in transcriptional regulation. This chain is Zinc finger protein 215 (ZNF215), found in Homo sapiens (Human).